A 586-amino-acid chain; its full sequence is Regulatory protein NPR3 (586 aa).

Position 10 is a phosphoserine (Ser10). A BTB domain is found at 60-135 (SDAEIIVDGV…IYTGRLKPFP (76 aa)). The C2HC NPR-type zinc finger occupies 138–152 (VSTCVDPVCSHDCCR). Positions 141, 146, 148, and 151 each coordinate Zn(2+). ANK repeat units follow at residues 261-291 (ERIG…TLDQ), 293-320 (NGLH…DVNY), and 324-353 (RGYT…NASE). The tract at residues 383–523 (ESSKARLCID…MAEYIDDDIL (141 aa)) is salicylic acid-binding core (SBC). Arg428 is a salicylate binding site. A disordered region spans residues 554 to 586 (YSKDKESKIARSCLSASSSPSSSSIRDDLHNTT). Low complexity predominate over residues 565–577 (SCLSASSSPSSSS).

This sequence belongs to the plant 'ANKYRIN-BTB/POZ' family. 'NPR1-like' subfamily. Forms homodimers and heterodimers with NPR4 in the presence of salicylic acid (SA). Interacts with TGA2, TGA3, TGA5 and TGA6. Interacts with CUL3A, a core component of the cullin-RING ubiquitin ligases (CRL). Interacts with TGA2 in vivo in the nucleus. Binds to NPR1; this interaction is promoted by association with SA, probably due to conformational changes.

It localises to the nucleus. Its pathway is protein modification; protein ubiquitination. Its function is as follows. Salicylic acid (SA)-binding substrate-specific adapter of an E3 ubiquitin-protein ligase complex (CUL3-RBX1-BTB) which mediates the ubiquitination and subsequent proteasomal degradation of NPR1 in response to SA. Together with NPR4, acts as receptor of salicylic acid to monitor immunity in a NPR1-dependent manner and induce systemic acquired resistance (SAR). Involved in the regulation of basal defense responses against pathogens, and may be implicated in the cross-talk between the SA- and JA-dependent signaling pathways. This Arabidopsis thaliana (Mouse-ear cress) protein is Regulatory protein NPR3.